Reading from the N-terminus, the 181-residue chain is RNA-binding protein (181 aa).

Positions 106-181 are disordered; the sequence is FLTSVNPGES…DANTRKSKRK (76 aa). The segment covering 141 to 157 has biased composition (basic residues); it reads RNSKKGAKKSSSARKKK. Over residues 160–172 the composition is skewed to low complexity; the sequence is SSNSETDLSSDSD.

It belongs to the phytoreovirus RNA-binding protein family.

The protein localises to the host cytoplasm. Its function is as follows. Constituent of viral factories. Binds to ssRNA and dsRNA. This chain is RNA-binding protein, found in Rice dwarf virus (isolate Akita) (RDV).